The sequence spans 680 residues: Lipase 1 (680 aa).

A signal peptide spans 1–34 (MKSQNKYSIRKFSVGASSILIATLLFLSGGQAQA). Residues 35-290 (AEKQVNMGNS…AKAKGDQTNK (256 aa)) constitute a propeptide that is removed on maturation. Disordered regions lie at residues 39-58 (VNMG…GDQQ) and 82-260 (KNLH…KNGL). The segment covering 40 to 58 (NMGNSQEDTVTAQSIGDQQ) has biased composition (polar residues). The span at 84–112 (LHNDKTISEENHRKTDDLNKDQLKDDKKS) shows a compositional bias: basic and acidic residues. Polar residues-rich tracts occupy residues 162-193 (SQDL…SQRE) and 204-223 (QPQQ…FNNE). Residues 224-234 (QEVKPQKDEKT) show a composition bias toward basic and acidic residues. Residues 235–246 (LSVSDLKNNQKS) are compositionally biased toward polar residues. Serine 408 acts as the Nucleophile in catalysis. Aspartate 600 acts as the Charge relay system in catalysis. Position 638 (aspartate 638) interacts with Ca(2+). Residue histidine 639 is the Charge relay system of the active site. 3 residues coordinate Ca(2+): aspartate 641, aspartate 646, and aspartate 649.

The protein belongs to the AB hydrolase superfamily. Lipase family.

Its subcellular location is the secreted. It catalyses the reaction a triacylglycerol + H2O = a diacylglycerol + a fatty acid + H(+). This is Lipase 1 (lip1) from Staphylococcus aureus (strain MRSA252).